A 503-amino-acid chain; its full sequence is Lithocholate 6-beta-hydroxylase (503 aa).

Residue Cys-442 participates in heme binding.

The protein belongs to the cytochrome P450 family. It depends on heme as a cofactor.

The protein localises to the endoplasmic reticulum membrane. It is found in the microsome membrane. It catalyses the reaction lithocholate + reduced [NADPH--hemoprotein reductase] + O2 = 6beta-hydroxylithocholate + oxidized [NADPH--hemoprotein reductase] + H2O + H(+). In terms of biological role, catalyzes the 6 beta-hydroxylation of lithocholic acid and steroid hormones. The polypeptide is Lithocholate 6-beta-hydroxylase (CYP3A10) (Mesocricetus auratus (Golden hamster)).